The sequence spans 792 residues: Phenylalanine--tRNA ligase beta subunit (792 aa).

In terms of domain architecture, tRNA-binding spans 39-147 (AAAFSGVVVG…DNAPIGQDIR (109 aa)). One can recognise a B5 domain in the interval 400-475 (PERPAVRLRP…RLHGYDAIPA (76 aa)). Residues Asp-453, Asp-459, Glu-462, and Glu-463 each coordinate Mg(2+). Residues 698–791 (SRQPAVTRDV…TETSLGARLR (94 aa)) form the FDX-ACB domain.

The protein belongs to the phenylalanyl-tRNA synthetase beta subunit family. Type 1 subfamily. In terms of assembly, tetramer of two alpha and two beta subunits. Requires Mg(2+) as cofactor.

It localises to the cytoplasm. It carries out the reaction tRNA(Phe) + L-phenylalanine + ATP = L-phenylalanyl-tRNA(Phe) + AMP + diphosphate + H(+). This is Phenylalanine--tRNA ligase beta subunit from Aromatoleum aromaticum (strain DSM 19018 / LMG 30748 / EbN1) (Azoarcus sp. (strain EbN1)).